The chain runs to 468 residues: ATP synthase subunit beta (468 aa).

155 to 162 (GGAGVGKT) is an ATP binding site.

The protein belongs to the ATPase alpha/beta chains family. As to quaternary structure, F-type ATPases have 2 components, CF(1) - the catalytic core - and CF(0) - the membrane proton channel. CF(1) has five subunits: alpha(3), beta(3), gamma(1), delta(1), epsilon(1). CF(0) has three main subunits: a(1), b(2) and c(9-12). The alpha and beta chains form an alternating ring which encloses part of the gamma chain. CF(1) is attached to CF(0) by a central stalk formed by the gamma and epsilon chains, while a peripheral stalk is formed by the delta and b chains.

It is found in the cell membrane. It catalyses the reaction ATP + H2O + 4 H(+)(in) = ADP + phosphate + 5 H(+)(out). Produces ATP from ADP in the presence of a proton gradient across the membrane. The catalytic sites are hosted primarily by the beta subunits. The protein is ATP synthase subunit beta of Streptococcus pyogenes serotype M49 (strain NZ131).